Consider the following 375-residue polypeptide: Succinyl-diaminopimelate desuccinylase (375 aa).

Residue His-66 participates in Zn(2+) binding. Asp-68 is an active-site residue. Asp-99 provides a ligand contact to Zn(2+). Residue Glu-133 is the Proton acceptor of the active site. Residues Glu-134, Glu-162, and His-348 each coordinate Zn(2+).

It belongs to the peptidase M20A family. DapE subfamily. In terms of assembly, homodimer. It depends on Zn(2+) as a cofactor. Co(2+) is required as a cofactor.

It catalyses the reaction N-succinyl-(2S,6S)-2,6-diaminopimelate + H2O = (2S,6S)-2,6-diaminopimelate + succinate. It participates in amino-acid biosynthesis; L-lysine biosynthesis via DAP pathway; LL-2,6-diaminopimelate from (S)-tetrahydrodipicolinate (succinylase route): step 3/3. Catalyzes the hydrolysis of N-succinyl-L,L-diaminopimelic acid (SDAP), forming succinate and LL-2,6-diaminopimelate (DAP), an intermediate involved in the bacterial biosynthesis of lysine and meso-diaminopimelic acid, an essential component of bacterial cell walls. The protein is Succinyl-diaminopimelate desuccinylase of Serratia proteamaculans (strain 568).